A 270-amino-acid polypeptide reads, in one-letter code: S-methyl-5'-thioadenosine phosphorylase (270 aa).

Residues Ser16, 58-59 (RH), and 91-92 (SA) each bind phosphate. 3 disulfides stabilise this stretch: Cys138/Cys205, Cys200/Cys262, and Cys259/Cys261. Met190 lines the substrate pocket. A phosphate-binding site is contributed by Thr191. 214 to 216 (DYD) contributes to the substrate binding site.

This sequence belongs to the PNP/MTAP phosphorylase family. MTAP subfamily. As to quaternary structure, homohexamer. Dimer of a homotrimer.

The enzyme catalyses S-methyl-5'-thioadenosine + phosphate = 5-(methylsulfanyl)-alpha-D-ribose 1-phosphate + adenine. It participates in amino-acid biosynthesis; L-methionine biosynthesis via salvage pathway; S-methyl-5-thio-alpha-D-ribose 1-phosphate from S-methyl-5'-thioadenosine (phosphorylase route): step 1/1. Functionally, catalyzes the reversible phosphorylation of S-methyl-5'-thioadenosine (MTA) to adenine and 5-methylthioribose-1-phosphate. Involved in the breakdown of MTA, a major by-product of polyamine biosynthesis. Responsible for the first step in the methionine salvage pathway after MTA has been generated from S-adenosylmethionine. Has broad substrate specificity with 6-aminopurine nucleosides as preferred substrates. The chain is S-methyl-5'-thioadenosine phosphorylase from Saccharolobus solfataricus (strain ATCC 35092 / DSM 1617 / JCM 11322 / P2) (Sulfolobus solfataricus).